The primary structure comprises 656 residues: Anion exchange transporter (656 aa).

Over 1–75 (MTGAKRKKRS…LSFAMLSSVH (75 aa)) the chain is Cytoplasmic. A helical transmembrane segment spans residues 76-96 (PVFGLYGSLFPAIIYAIFGMG). Residues 97–144 (RHVATGTFALTSLISANAVERLVPQSSRNLTTQSNSSVLGLSEFELQR) lie on the Extracellular side of the membrane. Residues 145–165 (IGVAAAVSFLGGVIQLVMFVL) form a helical membrane-spanning segment. Position 166 (Gln-166) is a topological domain, cytoplasmic. The helical transmembrane segment at 167-187 (LGSATFLLTEPVISAMTTGAA) threads the bilayer. Topologically, residues 188–199 (THVVTSQVKYLL) are extracellular. Residues 200–220 (GIKMPYISGPLGFFYIYAYVF) traverse the membrane as a helical segment. At 221–222 (EN) the chain is on the cytoplasmic side. A helical transmembrane segment spans residues 223–243 (IKSVQLEALLFSLLSIIVLVL). Residues 244–254 (VKELNEQFKRK) lie on the Extracellular side of the membrane. A helical transmembrane segment spans residues 255-275 (IKVVLPVDLVLIIAASFACYC). The Cytoplasmic portion of the chain corresponds to 276–306 (TNMENTYGLEVVGHIPNGIPPPRAPPMNILS). Residues 307 to 327 (AVLTEAFGVALVGYVASLALA) traverse the membrane as a helical segment. Topologically, residues 328–343 (QGSAKKFKYSVDDNQE) are extracellular. A helical transmembrane segment spans residues 344–364 (FLAHGLSNVIPSFLFCIPSAA). At 365-383 (AMGRTAGLYSTGAKTQVAC) the chain is on the cytoplasmic side. The next 2 helical transmembrane spans lie at 384-404 (LISC…LYWL) and 405-425 (PMCV…IQFR). At 426–448 (DLKKYWNVDKIDWGIWISTYIFT) the chain is on the extracellular side. A helical transmembrane segment spans residues 449–469 (ICFAANVGLLFGVICTIAIVL). The Cytoplasmic segment spans residues 470 to 656 (GRFPRAKTLS…LSKASDHSEV (187 aa)). An STAS domain is found at 492 to 641 (TEMHDETSQQ…DSVPAAISII (150 aa)). The tract at residues 641 to 656 (IQSNKNLSKASDHSEV) is membrane targeting.

The protein belongs to the SLC26A/SulP transporter (TC 2.A.53) family. As to expression, expressed in the Reissner's membrane epithelial cells in the cochlea (at protein level). Expressed in the retinal pigment epithelium (at protein level). Abundantly expressed in parietal cells on the glandular portion of the stomach. Lower levels are observed in the kidney, with expression in the proximal tubule and thick ascending limb of the loop of Henle. Also expressed in distal segments of nephron, in extraglomerular mesagial cells and a subpopulation of intercalated cells of outer medullary collecting ducts. Expressed in the thyroid gland.

It is found in the basolateral cell membrane. Its subcellular location is the recycling endosome membrane. The protein resides in the apical cell membrane. The protein localises to the lateral cell membrane. It carries out the reaction chloride(in) = chloride(out). It catalyses the reaction iodide(out) = iodide(in). The enzyme catalyses bromide(in) = bromide(out). The catalysed reaction is oxalate(in) = oxalate(out). It carries out the reaction nitrate(in) = nitrate(out). It catalyses the reaction sulfate(in) = sulfate(out). The enzyme catalyses hydrogencarbonate(in) = hydrogencarbonate(out). The catalysed reaction is D-gluconate(in) = D-gluconate(out). It carries out the reaction thiocyanate(in) = thiocyanate(out). It catalyses the reaction hydrogencarbonate(in) + chloride(out) = hydrogencarbonate(out) + chloride(in). Its activity is regulated as follows. Regulated by pH. Activity inhibited by all inhibitors of several anion channels and transporters, including 4,4'-Di-isothiocyanatostilbene-2,2'-disulfonic acid (DIDS), diphenylamine-2-carboxylic acid, glybenclamide and 5-Nitro-2-(3-phenylpropyl-amino)benzoic acid. Acts as an anion channel mediating the transport of chloride, bromide, iodide, nitrate, sulfate, gluconate, thiocyanate and bicarbonate ions. Its permeability towards bicarbonate is weak and increases when pH is above 7. Mediates oxalate transport. Mediates thiocyanate transport in retinal pigment epithelium cells. Mediates iodide transport in the thyroid gland, playing an important role in the synthesis of thyroid hormones and the maintenance of thyroid function. Although it is an anion channel, according to PubMed:12736153 and PubMed:19723628 it has been shown to exhibit chloride-bicarbonate exchanger activity. This is Anion exchange transporter from Mus musculus (Mouse).